Here is a 930-residue protein sequence, read N- to C-terminus: Translation initiation factor IF-2 (930 aa).

The disordered stretch occupies residues 51-325 (PGAGKSAAKP…TREIGGVKVP (275 aa)). 2 stretches are compositionally biased toward low complexity: residues 56–111 (SAAK…KPGV) and 121–162 (TPAA…GNNP). Gly residues predominate over residues 263-295 (RPGGGPGGGPGRPGGPGGRGGRGNAQGAFGRGG). A compositionally biased stretch (basic residues) spans 296–307 (GPRKGRKSKRAK). A compositionally biased stretch (basic and acidic residues) spans 308–320 (RQEFEQQHTREIG). Positions 422 to 596 (PRPAVVTVMG…LTADAALELT (175 aa)) constitute a tr-type G domain. The interval 431-438 (GHVDHGKT) is G1. Residue 431 to 438 (GHVDHGKT) coordinates GTP. A G2 region spans residues 456–460 (GITQH). A G3 region spans residues 481-484 (DTPG). Residues 481–485 (DTPGH) and 535–538 (NKID) contribute to the GTP site. The interval 535–538 (NKID) is G4. Positions 571–573 (SAR) are G5.

Belongs to the TRAFAC class translation factor GTPase superfamily. Classic translation factor GTPase family. IF-2 subfamily.

It localises to the cytoplasm. In terms of biological role, one of the essential components for the initiation of protein synthesis. Protects formylmethionyl-tRNA from spontaneous hydrolysis and promotes its binding to the 30S ribosomal subunits. Also involved in the hydrolysis of GTP during the formation of the 70S ribosomal complex. This is Translation initiation factor IF-2 from Micrococcus luteus (strain ATCC 4698 / DSM 20030 / JCM 1464 / CCM 169 / CCUG 5858 / IAM 1056 / NBRC 3333 / NCIMB 9278 / NCTC 2665 / VKM Ac-2230) (Micrococcus lysodeikticus).